The chain runs to 48 residues: Large ribosomal subunit protein eL40 (48 aa).

This sequence belongs to the eukaryotic ribosomal protein eL40 family.

This Methanospirillum hungatei JF-1 (strain ATCC 27890 / DSM 864 / NBRC 100397 / JF-1) protein is Large ribosomal subunit protein eL40.